We begin with the raw amino-acid sequence, 60 residues long: Small, acid-soluble spore protein C2 (60 aa).

Belongs to the alpha/beta-type SASP family. In terms of processing, SASP are degraded in the first minutes of spore germination and provide amino acids for both new protein synthesis and metabolism.

In terms of biological role, SASP are bound to spore DNA. They are double-stranded DNA-binding proteins that cause DNA to change to an a-like conformation. They protect the DNA backbone from chemical and enzymatic cleavage and are thus involved in dormant spore's high resistance to UV light. The sequence is that of Small, acid-soluble spore protein C2 (sspC2) from Clostridium perfringens (strain 13 / Type A).